Reading from the N-terminus, the 258-residue chain is Protein OS-9 homolog (258 aa).

Residues 1 to 18 form the signal peptide; that stretch reads MNWTSLVYLWFIFKSIFA. N-linked (GlcNAc...) asparagine glycans are attached at residues Asn2, Asn51, and Asn70. The MRH domain occupies 114-237; it reads TSCVFSFNLH…HINVPKLCSL (124 aa). A disulfide bond links Cys116 and Cys132. 2 residues coordinate a mannooligosaccharide derivative: Trp127 and Gln139. Residue Asn165 is glycosylated (N-linked (GlcNAc...) asparagine). Cystine bridges form between Cys193/Cys223 and Cys208/Cys235. Residues Asp194, Arg200, Glu219, and Tyr225 each contribute to the a mannooligosaccharide derivative site.

It belongs to the OS-9 family. In terms of assembly, interacts with missfolded ER lumenal proteins.

It localises to the endoplasmic reticulum membrane. Lectin involved in the quality control of the secretory pathway. As a member of the endoplasmic reticulum-associated degradation lumenal (ERAD-L) surveillance system, targets misfolded endoplasmic reticulum lumenal glycoproteins for degradation. This Candida albicans (strain SC5314 / ATCC MYA-2876) (Yeast) protein is Protein OS-9 homolog (YOS9).